The sequence spans 317 residues: Porphobilinogen deaminase (317 aa).

Residue Cys-245 is modified to S-(dipyrrolylmethanemethyl)cysteine.

Belongs to the HMBS family. As to quaternary structure, monomer. The cofactor is dipyrromethane.

It carries out the reaction 4 porphobilinogen + H2O = hydroxymethylbilane + 4 NH4(+). It participates in porphyrin-containing compound metabolism; protoporphyrin-IX biosynthesis; coproporphyrinogen-III from 5-aminolevulinate: step 2/4. Its pathway is porphyrin-containing compound metabolism; chlorophyll biosynthesis. Functionally, tetrapolymerization of the monopyrrole PBG into the hydroxymethylbilane pre-uroporphyrinogen in several discrete steps. The sequence is that of Porphobilinogen deaminase from Synechococcus sp. (strain CC9605).